We begin with the raw amino-acid sequence, 26 residues long: Dermaseptin-J2 (26 aa).

Val26 is modified (valine amide).

Expressed by the skin glands.

The protein resides in the secreted. Has antimicrobial activity. The protein is Dermaseptin-J2 of Phasmahyla jandaia (Jandaia leaf frog).